The primary structure comprises 547 residues: G protein-coupled receptor associated sorting protein 3 (547 aa).

Composition is skewed to basic residues over residues 1–10 (MTGTKNKTRA) and 38–48 (AKTRAKAKAKT). Positions 1–53 (MTGTKNKTRAQAKTEKKPVTQAKAGAEREATGVVRPVAKTRAKAKAKTGSKTD) are disordered.

The protein belongs to the GPRASP family. In terms of assembly, homodimer.

The protein resides in the cytoplasm. Its subcellular location is the nucleus. Functionally, survival and differentiation promoting protein that plays a role in the regulation of neurosynaptogenesis. Induces phosphatase PP2A activity which results in APP dephosphorylation and inhibits BACE1-mediated processing of APP. This is G protein-coupled receptor associated sorting protein 3 (GPRASP3) from Macaca fascicularis (Crab-eating macaque).